A 121-amino-acid polypeptide reads, in one-letter code: Small ribosomal subunit protein uS13 (121 aa).

The interval 96-121 is disordered; that stretch reads PVRGQNTKNNARTRKGKAVAIAGKKK. Positions 106–121 are enriched in basic residues; it reads ARTRKGKAVAIAGKKK.

It belongs to the universal ribosomal protein uS13 family. Part of the 30S ribosomal subunit. Forms a loose heterodimer with protein S19. Forms two bridges to the 50S subunit in the 70S ribosome.

Its function is as follows. Located at the top of the head of the 30S subunit, it contacts several helices of the 16S rRNA. In the 70S ribosome it contacts the 23S rRNA (bridge B1a) and protein L5 of the 50S subunit (bridge B1b), connecting the 2 subunits; these bridges are implicated in subunit movement. Contacts the tRNAs in the A and P-sites. This Streptococcus pneumoniae serotype 4 (strain ATCC BAA-334 / TIGR4) protein is Small ribosomal subunit protein uS13.